Reading from the N-terminus, the 306-residue chain is Curved DNA-binding protein (306 aa).

The J domain maps to 5 to 69 (DYYAIMGVKP…QRRAEYDQLW (65 aa)).

The protein localises to the cytoplasm. It localises to the nucleoid. DNA-binding protein that preferentially recognizes a curved DNA sequence. It is probably a functional analog of DnaJ; displays overlapping activities with DnaJ, but functions under different conditions, probably acting as a molecular chaperone in an adaptive response to environmental stresses other than heat shock. Lacks autonomous chaperone activity; binds native substrates and targets them for recognition by DnaK. Its activity is inhibited by the binding of CbpM. The polypeptide is Curved DNA-binding protein (Salmonella paratyphi A (strain ATCC 9150 / SARB42)).